The chain runs to 264 residues: Thymidylate synthase (264 aa).

DUMP is bound at residue Arg-21. Residue His-51 participates in (6R)-5,10-methylene-5,6,7,8-tetrahydrofolate binding. 126–127 (RR) is a binding site for dUMP. Cys-146 functions as the Nucleophile in the catalytic mechanism. DUMP contacts are provided by residues 166–169 (RSCD), Asn-177, and 207–209 (HLY). Asp-169 serves as a coordination point for (6R)-5,10-methylene-5,6,7,8-tetrahydrofolate. Position 263 (Ser-263) interacts with (6R)-5,10-methylene-5,6,7,8-tetrahydrofolate.

This sequence belongs to the thymidylate synthase family. Bacterial-type ThyA subfamily. As to quaternary structure, homodimer.

Its subcellular location is the cytoplasm. The enzyme catalyses dUMP + (6R)-5,10-methylene-5,6,7,8-tetrahydrofolate = 7,8-dihydrofolate + dTMP. It functions in the pathway pyrimidine metabolism; dTTP biosynthesis. In terms of biological role, catalyzes the reductive methylation of 2'-deoxyuridine-5'-monophosphate (dUMP) to 2'-deoxythymidine-5'-monophosphate (dTMP) while utilizing 5,10-methylenetetrahydrofolate (mTHF) as the methyl donor and reductant in the reaction, yielding dihydrofolate (DHF) as a by-product. This enzymatic reaction provides an intracellular de novo source of dTMP, an essential precursor for DNA biosynthesis. The sequence is that of Thymidylate synthase from Buchnera aphidicola subsp. Acyrthosiphon pisum (strain 5A).